Here is a 327-residue protein sequence, read N- to C-terminus: Mitochondrial carnitine carrier (327 aa).

Positions 1–11 (MSSDTSLSESS) are enriched in low complexity. The interval 1 to 29 (MSSDTSLSESSLLKEESGSLTKSRPPIKS) is disordered. The next 6 membrane-spanning stretches (helical) occupy residues 33–49 (RENI…GVCA), 107–123 (LGVT…YDVG), 141–162 (MGQM…TAPT), 196–212 (GSLA…ALYF), 244–260 (LAGG…VFPI), and 293–313 (FFPG…ATFL). Solcar repeat units follow at residues 33–126 (RENI…GKKL), 139–221 (LTMG…SKNY), and 237–321 (VNIL…THSL).

It belongs to the mitochondrial carrier (TC 2.A.29) family.

The protein localises to the mitochondrion inner membrane. Its function is as follows. Transports carnitine, acetylcarnitine, propionylcarnitine and to a much lower extent medium- and long-chain acylcarnitines. The polypeptide is Mitochondrial carnitine carrier (CRC1) (Saccharomyces cerevisiae (strain ATCC 204508 / S288c) (Baker's yeast)).